We begin with the raw amino-acid sequence, 393 residues long: Putative odorant receptor 69a, isoform B (393 aa).

Over 1 to 39 (MQLEDFMRYPDLVCQAAQLPRYTWNGRRSLEVKRNLAKR) the chain is Cytoplasmic. A helical membrane pass occupies residues 40 to 60 (IIFWLGAVNLVYHNIGCVMYG). At 61–69 (YFGDGRTKD) the chain is on the extracellular side. Residues 70-90 (PIAYLAELASVASMLGFTIVG) form a helical membrane-spanning segment. The Cytoplasmic portion of the chain corresponds to 91-138 (TLNLWKMLSLKTHFENLLNEFEELFQLIKHRAYRIHHYQEKYTRHIRN). Residues 139 to 159 (TFIFHTSAVVYYNSLPILLMI) traverse the membrane as a helical segment. The Extracellular segment spans residues 160-208 (REHFSNSQQLGYRIQSNTWYPWQVQGSIPGFFAAVACQIFSCQTNMCVN). The chain crosses the membrane as a helical span at residues 209–229 (MFIQFLINFFGIQLEIHFDGL). Residues 230-269 (ARQLETIDARNPHAKDQLKYLIVYHTKLLNLADRVNRSFN) are Cytoplasmic-facing. A helical transmembrane segment spans residues 270–290 (FTFLISLSVSMISNCFLAFSM). At 291–305 (TMFDFGTSLKHLLGL) the chain is on the extracellular side. The helical transmembrane segment at 306-326 (LLFITYNFSMCRSGTHLILTS) threads the bilayer. Topologically, residues 327–365 (GKVLPAAFYNNWYEGDLVYRRMLLILMMRATKPYMWKTY) are cytoplasmic. The chain crosses the membrane as a helical span at residues 366-386 (KLAPVSITTYMATLKFSYQMF). The Extracellular segment spans residues 387–393 (TCVRSLK).

This sequence belongs to the insect chemoreceptor superfamily. Heteromeric odorant receptor channel (TC 1.A.69) family. Or49a subfamily. In terms of assembly, interacts with Orco. Complexes exist early in the endomembrane system in olfactory sensory neurons (OSNs), coupling these complexes to the conserved ciliary trafficking pathway. Expressed in olfactory sensory neurons in the antenna.

The protein resides in the cell membrane. Odorant receptor which mediates acceptance or avoidance behavior, depending on its substrates. The odorant receptor repertoire encodes a large collection of odor stimuli that vary widely in identity, intensity, and duration. May form a complex with Orco to form odorant-sensing units, providing sensitive and prolonged odorant signaling and calcium permeability. This Drosophila melanogaster (Fruit fly) protein is Putative odorant receptor 69a, isoform B (Or69a).